A 193-amino-acid chain; its full sequence is GTP cyclohydrolase 1 (193 aa).

Residues Cys-73, His-76, and Cys-144 each contribute to the Zn(2+) site.

The protein belongs to the GTP cyclohydrolase I family. Homomer.

The catalysed reaction is GTP + H2O = 7,8-dihydroneopterin 3'-triphosphate + formate + H(+). It functions in the pathway cofactor biosynthesis; 7,8-dihydroneopterin triphosphate biosynthesis; 7,8-dihydroneopterin triphosphate from GTP: step 1/1. This Hyperthermus butylicus (strain DSM 5456 / JCM 9403 / PLM1-5) protein is GTP cyclohydrolase 1.